A 122-amino-acid polypeptide reads, in one-letter code: Pupal cuticle protein Edg-78E (122 aa).

An N-terminal signal peptide occupies residues 1–16; the sequence is MYKYLFCLALIGCACA. The Chitin-binding type R&amp;R domain maps to 36 to 96; it reads EGNYQYAYET…PVGDHLPTPP (61 aa).

As to expression, imaginal (anterior) epidermis.

Component of the cuticle of the pupa of fruit fly. The chain is Pupal cuticle protein Edg-78E (Edg78E) from Drosophila melanogaster (Fruit fly).